The following is a 135-amino-acid chain: Histone H3 type 2 (135 aa).

The tract at residues 1–40 (MARTKQTARKSTGGKAPRKQLATKAARKTPATGGVKKPHR) is disordered. At lysine 5 the chain carries N6-methyllysine. The residue at position 10 (lysine 10) is an N6-acetyllysine; alternate. The residue at position 10 (lysine 10) is an N6-methyllysine; alternate. Residue serine 11 is modified to Phosphoserine. Residue threonine 12 is modified to Phosphothreonine. An N6-acetyllysine mark is found at lysine 15, lysine 19, and lysine 24. Lysine 28 bears the N6-acetyllysine; alternate mark. The residue at position 28 (lysine 28) is an N6-methyllysine; alternate. Lysine 36 and lysine 37 each carry N6-methyllysine.

This sequence belongs to the histone H3 family. As to quaternary structure, the nucleosome is a histone octamer containing two molecules each of H2A, H2B, H3 and H4 assembled in one H3-H4 heterotetramer and two H2A-H2B heterodimers. The octamer wraps approximately 147 bp of DNA. Post-translationally, acetylation is generally linked to gene activation. Acetylated to form H3K9ac (11%), H3K14ac (17%), H3K18ac (11%), H3K23ac (16%) and H3K27ac (7%). H3K4, H3K35 and H3K36 are not acetylated. H3K4me prevents acetylation. 32% of the histone H3 are acetylated with, on average, 2.4 acetyl-Lys. They are all continuously deacatylated and re-acetylated with a half-life of approximately 2 minutes. Monomethylated to form H3K4me1 (81%), H3K9me1 (16%), H3K27me1 (25%), H3K35me1 (25%) and H3K36me1 (5%). No methylation at H3K14, H3K18 and H3K23. Methylated by a protein complex that includes Mut11. Set1 methylates specifically H3K4. H3K4me1 is associated with silenced euchromatin. Set3 forms H3K9me1, while H3K9me2 is undetected. H3K9me1 is specifically associated with silent, multi-copy transgenes. In terms of processing, no phosphorylation detected.

The protein localises to the nucleus. It is found in the chromosome. In terms of biological role, core component of nucleosome. Nucleosomes wrap and compact DNA into chromatin, limiting DNA accessibility to the cellular machineries which require DNA as a template. Histones thereby play a central role in transcription regulation, DNA repair, DNA replication and chromosomal stability. DNA accessibility is regulated via a complex set of post-translational modifications of histones, also called histone code, and nucleosome remodeling. The sequence is that of Histone H3 type 2 (ch3-II) from Chlamydomonas reinhardtii (Chlamydomonas smithii).